The chain runs to 124 residues: Small ribosomal subunit protein uS12 (124 aa).

D89 carries the 3-methylthioaspartic acid modification.

Belongs to the universal ribosomal protein uS12 family. In terms of assembly, part of the 30S ribosomal subunit. Contacts proteins S8 and S17. May interact with IF1 in the 30S initiation complex.

In terms of biological role, with S4 and S5 plays an important role in translational accuracy. Its function is as follows. Interacts with and stabilizes bases of the 16S rRNA that are involved in tRNA selection in the A site and with the mRNA backbone. Located at the interface of the 30S and 50S subunits, it traverses the body of the 30S subunit contacting proteins on the other side and probably holding the rRNA structure together. The combined cluster of proteins S8, S12 and S17 appears to hold together the shoulder and platform of the 30S subunit. The chain is Small ribosomal subunit protein uS12 from Psychrobacter arcticus (strain DSM 17307 / VKM B-2377 / 273-4).